The chain runs to 275 residues: Biotin synthase (275 aa).

A Radical SAM core domain is found at 1–217 (MLCAICNVSS…DTAKTLPQCR (217 aa)). Residues C13, C17, and C20 each coordinate [4Fe-4S] cluster. Residues C57, C92, C150, and R217 each contribute to the [2Fe-2S] cluster site.

The protein belongs to the radical SAM superfamily. Biotin synthase family. Homodimer. It depends on [4Fe-4S] cluster as a cofactor. The cofactor is [2Fe-2S] cluster.

It catalyses the reaction (4R,5S)-dethiobiotin + (sulfur carrier)-SH + 2 reduced [2Fe-2S]-[ferredoxin] + 2 S-adenosyl-L-methionine = (sulfur carrier)-H + biotin + 2 5'-deoxyadenosine + 2 L-methionine + 2 oxidized [2Fe-2S]-[ferredoxin]. It participates in cofactor biosynthesis; biotin biosynthesis; biotin from 7,8-diaminononanoate: step 2/2. Functionally, catalyzes the conversion of dethiobiotin (DTB) to biotin by the insertion of a sulfur atom into dethiobiotin via a radical-based mechanism. This chain is Biotin synthase, found in Campylobacter fetus subsp. fetus (strain 82-40).